A 146-amino-acid polypeptide reads, in one-letter code: Hemoglobin subunit beta (146 aa).

Residues 2-146 (QWTAEEKQLI…VAHALARKYH (145 aa)) enclose the Globin domain. His-63 and His-92 together coordinate heme b.

This sequence belongs to the globin family. As to quaternary structure, heterotetramer of two alpha chains and two beta chains. As to expression, red blood cells.

In terms of biological role, involved in oxygen transport from the lung to the various peripheral tissues. In Turdus merula (Common blackbird), this protein is Hemoglobin subunit beta (HBB).